Consider the following 482-residue polypeptide: Putative transposase R186 (482 aa).

Residues Cys-416, Cys-419, Cys-433, and Cys-435 each coordinate Zn(2+).

The protein in the central section; belongs to the transposase 2 family. This sequence in the C-terminal section; belongs to the transposase 35 family.

This chain is Putative transposase R186, found in Acanthamoeba polyphaga (Amoeba).